Reading from the N-terminus, the 407-residue chain is Monooxygenase 2 (407 aa).

This sequence belongs to the 3-hydroxybenzoate 6-hydroxylase family. Monomer. Requires FAD as cofactor. As to expression, expressed in seeds, seedlings, roots, leaves, flowers, pollen and siliques.

This is Monooxygenase 2 from Arabidopsis thaliana (Mouse-ear cress).